Here is a 1375-residue protein sequence, read N- to C-terminus: DNA-directed RNA polymerase subunit beta (1375 aa).

The protein belongs to the RNA polymerase beta chain family. The RNAP catalytic core consists of 2 alpha, 1 beta, 1 beta' and 1 omega subunit. When a sigma factor is associated with the core the holoenzyme is formed, which can initiate transcription.

It carries out the reaction RNA(n) + a ribonucleoside 5'-triphosphate = RNA(n+1) + diphosphate. DNA-dependent RNA polymerase catalyzes the transcription of DNA into RNA using the four ribonucleoside triphosphates as substrates. In Methylibium petroleiphilum (strain ATCC BAA-1232 / LMG 22953 / PM1), this protein is DNA-directed RNA polymerase subunit beta.